The primary structure comprises 299 residues: Somaliensene A/B synthase (299 aa).

7 helical membrane-spanning segments follow: residues 32–49 (WTTL…AVHT), 56–72 (TAVA…LFVY), 110–132 (IAVR…ALLW), 153–171 (LYAG…EIVA), 177–194 (AWRW…LMSV), 222–241 (VFLC…FLMA), and 247–269 (WWIV…RVVL).

Belongs to the UbiA prenyltransferase family. The cofactor is Mg(2+).

The protein resides in the cell membrane. The enzyme catalyses (2E,6E,10E,14E)-geranylfarnesyl diphosphate = somaliensene A + diphosphate. It catalyses the reaction (2E,6E,10E,14E)-geranylfarnesyl diphosphate = (-)-somaliensene B + diphosphate. It functions in the pathway secondary metabolite biosynthesis; terpenoid biosynthesis. Its function is as follows. Sesterterpene cyclase, which converts geranylfarnesyl diphosphate (GFPP) into the terpenes somaliensene A and somaliensene B. The sequence is that of Somaliensene A/B synthase from Streptomyces somaliensis (strain ATCC 33201 / DSM 40738 / JCM 12659 / KCTC 9044 / NCTC 11332 / NRRL B-12077 / IP 733).